The sequence spans 241 residues: Orotidine 5'-phosphate decarboxylase (241 aa).

Residues Asp16, Lys37, 64 to 73 (DLKFHDIPTT), Thr128, Arg190, Gln199, Gly219, and Arg220 each bind substrate. Lys66 acts as the Proton donor in catalysis.

This sequence belongs to the OMP decarboxylase family. Type 1 subfamily. As to quaternary structure, homodimer.

The enzyme catalyses orotidine 5'-phosphate + H(+) = UMP + CO2. It participates in pyrimidine metabolism; UMP biosynthesis via de novo pathway; UMP from orotate: step 2/2. In terms of biological role, catalyzes the decarboxylation of orotidine 5'-monophosphate (OMP) to uridine 5'-monophosphate (UMP). This is Orotidine 5'-phosphate decarboxylase from Prochlorococcus marinus (strain NATL1A).